We begin with the raw amino-acid sequence, 596 residues long: Lamin-B2 (596 aa).

Residues 1 to 20 are disordered; that stretch reads MASLPPHAGPATPLSPTRLS. The head stretch occupies residues 1–26; it reads MASLPPHAGPATPLSPTRLSRLQEKE. Position 12 is a phosphothreonine (threonine 12). Phosphoserine is present on serine 15. The 357-residue stretch at 24 to 380 folds into the IF rod domain; it reads EKEELRELND…KLLEGEEERL (357 aa). The interval 27–61 is coil 1A; it reads ELRELNDRLAHYIDRVRALELENDRLLLRISEKEE. Lysine 59 bears the N6-acetyllysine; alternate mark. Residue lysine 59 forms a Glycyl lysine isopeptide (Lys-Gly) (interchain with G-Cter in SUMO2); alternate linkage. Positions 62–73 are linker 1; the sequence is VTTREVSGIKTL. The tract at residues 74–207 is coil 1B; sequence YESELADARR…AFSKSVFEEE (134 aa). Glycyl lysine isopeptide (Lys-Gly) (interchain with G-Cter in SUMO2) cross-links involve residues lysine 173 and lysine 233. Positions 208–234 are linker 2; the sequence is VRETRRRHERRLVEVDSSRQQEYDFKM. Residues 235–378 form a coil 2 region; that stretch reads AQALEDLRSQ…YRKLLEGEEE (144 aa). Phosphoserine is present on residues serine 294 and serine 385. A disordered region spans residues 376–440; that stretch reads EEERLKLSPS…ASRVSSGSRL (65 aa). The tail stretch occupies residues 379–596; sequence RLKLSPSPSS…RTTSRGCRLM (218 aa). The segment covering 382–403 has biased composition (low complexity); it reads LSPSPSSRITISRATSSSSSSS. Threonine 391 carries an O-linked (GlcNAc) threonine glycan. A phosphoserine mark is found at serine 398, serine 400, and serine 402. Arginine 413 is modified (omega-N-methylarginine). A Nuclear localization signal motif is present at residues 415 to 420; the sequence is KRRRLE. Low complexity predominate over residues 425–439; the sequence is SGSPSRASRVSSGSR. The LTD domain occupies 438 to 559; that stretch reads SRLAQQTVAT…VKAAKHSSVQ (122 aa). Lysine 465 is covalently cross-linked (Glycyl lysine isopeptide (Lys-Gly) (interchain with G-Cter in SUMO2)). Serine 473 carries the post-translational modification Phosphoserine. Residues 552–596 form a disordered region; the sequence is AAKHSSVQGRENGEEEEEEEAEFGEEDLFHQQGDPRTTSRGCRLM. Over residues 564-577 the composition is skewed to acidic residues; it reads GEEEEEEEAEFGEE. A compositionally biased stretch (polar residues) spans 585 to 596; sequence DPRTTSRGCRLM. Cysteine 593 is modified (cysteine methyl ester). The S-farnesyl cysteine moiety is linked to residue cysteine 593. Residues 594–596 constitute a propeptide, removed in mature form; that stretch reads RLM.

The protein belongs to the intermediate filament family. In terms of assembly, dimer. Lamin dimers then assemble into dimeric head-to-tail polymers. Ultimately, two head-to-tail polymers assemble laterally into a protofilament with a uniformly shaped rod of 3.5 nm in diameter. Interacts with TMEM43. Post-translationally, B-type lamins undergo a series of modifications, such as farnesylation and phosphorylation. Increased phosphorylation of the lamins occurs before envelope disintegration and probably plays a role in regulating lamin associations. In terms of processing, phosphorylation plays a key role in lamin organization, subcellular localization and nuclear envelope disintegration. Phosphorylation by CDK1 at Ser-15 and Ser-385 at the onset of mitosis drives lamin disassembly and nuclear envelope breakdown. Germ cell-specific.

The protein localises to the nucleus lamina. Lamins are intermediate filament proteins that assemble into a filamentous meshwork, and which constitute the major components of the nuclear lamina, a fibrous layer on the nucleoplasmic side of the inner nuclear membrane. Lamins provide a framework for the nuclear envelope, bridging the nuclear envelope and chromatin, thereby playing an important role in nuclear assembly, chromatin organization, nuclear membrane and telomere dynamics. The structural integrity of the lamina is strictly controlled by the cell cycle, as seen by the disintegration and formation of the nuclear envelope in prophase and telophase, respectively. This Mus musculus (Mouse) protein is Lamin-B2 (Lmnb2).